The primary structure comprises 307 residues: UDP-3-O-acyl-N-acetylglucosamine deacetylase (307 aa).

Residues histidine 78, histidine 241, and aspartate 245 each contribute to the Zn(2+) site. Catalysis depends on histidine 268, which acts as the Proton donor.

Belongs to the LpxC family. The cofactor is Zn(2+).

The enzyme catalyses a UDP-3-O-[(3R)-3-hydroxyacyl]-N-acetyl-alpha-D-glucosamine + H2O = a UDP-3-O-[(3R)-3-hydroxyacyl]-alpha-D-glucosamine + acetate. It participates in glycolipid biosynthesis; lipid IV(A) biosynthesis; lipid IV(A) from (3R)-3-hydroxytetradecanoyl-[acyl-carrier-protein] and UDP-N-acetyl-alpha-D-glucosamine: step 2/6. Functionally, catalyzes the hydrolysis of UDP-3-O-myristoyl-N-acetylglucosamine to form UDP-3-O-myristoylglucosamine and acetate, the committed step in lipid A biosynthesis. This Polaromonas sp. (strain JS666 / ATCC BAA-500) protein is UDP-3-O-acyl-N-acetylglucosamine deacetylase.